Here is a 352-residue protein sequence, read N- to C-terminus: Thrombopoietin (352 aa).

The signal sequence occupies residues 1 to 23; that stretch reads MELTELLLVVMLLLTARLDPCLP. 2 disulfide bridges follow: C28/C172 and C50/C106. 5 N-linked (GlcNAc...) asparagine glycosylation sites follow: N185, N197, N206, N234, and N255. Residues 233-245 are compositionally biased toward polar residues; sequence LNQTSRSLNQTPG. Disordered regions lie at residues 233-259 and 292-352; these read LNQT…GTHG and YSPS…SQEE. A compositionally biased stretch (pro residues) spans 311-327; sequence PTSPTPQNPLQPPPPDP. Residues N332 and N347 are each glycosylated (N-linked (GlcNAc...) asparagine).

Belongs to the EPO/TPO family.

It localises to the secreted. Lineage-specific cytokine affecting the proliferation and maturation of megakaryocytes from their committed progenitor cells. It acts at a late stage of megakaryocyte development. It may be the major physiological regulator of circulating platelets. This chain is Thrombopoietin (THPO), found in Canis lupus familiaris (Dog).